Here is a 203-residue protein sequence, read N- to C-terminus: Ponticulin-like protein H (203 aa).

The first 20 residues, 1-20 (MKLLNSLVLLAALCAITANG), serve as a signal peptide directing secretion. N-linked (GlcNAc...) asparagine glycosylation occurs at Asn-58. Residues 127–168 (SDSTNPTSTPSTTPSATPTVTPSTTPTVTPTVTPSTTPTVAP) show a composition bias toward low complexity. The disordered stretch occupies residues 127–183 (SDSTNPTSTPSTTPSATPTVTPSTTPTVTPTVTPSTTPTVAPTVPPTTPPSTTTGSG). A lipid anchor (GPI-like-anchor amidated serine) is attached at Ser-182. Residues 183–203 (GSTVVASFGLIVSILLASLAL) constitute a propeptide, removed in mature form.

It belongs to the ponticulin family. Post-translationally, the GPI-like-anchor contains a phosphoceramide group, rather than a phosphatidyl group.

It is found in the cell membrane. Its function is as follows. Binds F-actin and nucleates actin assembly. The chain is Ponticulin-like protein H (ponH) from Dictyostelium discoideum (Social amoeba).